The following is a 396-amino-acid chain: Lipid-A-disaccharide synthase (396 aa).

It belongs to the LpxB family.

The catalysed reaction is a lipid X + a UDP-2-N,3-O-bis[(3R)-3-hydroxyacyl]-alpha-D-glucosamine = a lipid A disaccharide + UDP + H(+). The protein operates within bacterial outer membrane biogenesis; LPS lipid A biosynthesis. Its function is as follows. Condensation of UDP-2,3-diacylglucosamine and 2,3-diacylglucosamine-1-phosphate to form lipid A disaccharide, a precursor of lipid A, a phosphorylated glycolipid that anchors the lipopolysaccharide to the outer membrane of the cell. The sequence is that of Lipid-A-disaccharide synthase from Nitrobacter winogradskyi (strain ATCC 25391 / DSM 10237 / CIP 104748 / NCIMB 11846 / Nb-255).